The sequence spans 266 residues: Probable catechol O-methyltransferase 1 (266 aa).

The S-adenosyl-L-methionine site is built by Ile-56, Glu-78, Ser-86, Glu-106, Val-107, Ala-135, and Asp-162. Asp-162 is a Mg(2+) binding site. Lys-165 contacts substrate. Mg(2+) is bound by residues Asp-190 and Asn-191. Asn-191 contributes to the substrate binding site.

It belongs to the class I-like SAM-binding methyltransferase superfamily. Cation-dependent O-methyltransferase family. The cofactor is Mg(2+).

The protein resides in the cytoplasm. Its subcellular location is the nucleus. It carries out the reaction a catechol + S-adenosyl-L-methionine = a guaiacol + S-adenosyl-L-homocysteine + H(+). This Schizosaccharomyces pombe (strain 972 / ATCC 24843) (Fission yeast) protein is Probable catechol O-methyltransferase 1.